Consider the following 317-residue polypeptide: Beta-ketoacyl-[acyl-carrier-protein] synthase III (317 aa).

Catalysis depends on residues cysteine 112 and histidine 244. Residues 245 to 249 (QANLR) form an ACP-binding region. Asparagine 274 is a catalytic residue.

This sequence belongs to the thiolase-like superfamily. FabH family. As to quaternary structure, homodimer.

The protein resides in the cytoplasm. It catalyses the reaction malonyl-[ACP] + acetyl-CoA + H(+) = 3-oxobutanoyl-[ACP] + CO2 + CoA. Its pathway is lipid metabolism; fatty acid biosynthesis. Catalyzes the condensation reaction of fatty acid synthesis by the addition to an acyl acceptor of two carbons from malonyl-ACP. Catalyzes the first condensation reaction which initiates fatty acid synthesis and may therefore play a role in governing the total rate of fatty acid production. Possesses both acetoacetyl-ACP synthase and acetyl transacylase activities. Its substrate specificity determines the biosynthesis of branched-chain and/or straight-chain of fatty acids. The sequence is that of Beta-ketoacyl-[acyl-carrier-protein] synthase III from Sodalis glossinidius (strain morsitans).